The primary structure comprises 105 residues: U1-sicaritoxin-Li1b (105 aa).

The N-terminal stretch at Met-1–Ala-19 is a signal peptide. Positions Glu-20 to Arg-36 are excised as a propeptide. Intrachain disulfides connect Cys-38/Cys-55, Cys-46/Cys-60, Cys-54/Cys-73, and Cys-62/Cys-71. The residue at position 82 (Arg-82) is an Arginine amide. Positions Ala-86–Glu-105 are excised as a propeptide.

Belongs to the neurotoxin 28 (Litx) family. In terms of tissue distribution, expressed by the venom gland.

It localises to the secreted. Toxin active against insects (S.frugiperda larvae). May act on sodium (Nav) or calcium (Cav) channels. This is U1-sicaritoxin-Li1b from Loxosceles intermedia (Brown spider).